The primary structure comprises 228 residues: MSYVFINDSSQTSVPLLQACIDGDLSFARRLLETGCDPNIRDHRGRTGLHLAAARGNVDICRFLHKFGADLLATDYQGNTALHLCGHVDTIQFLVSNGLKIDICNHNGSTPLVLAKRRGVNKDAIRLLEGLEEQEVKGFNRGAHSKLEAMQMAESESAMESHSLLNPNLQNSEGVLSSFRSTWQEFVEDLGFWRVLLLLVVIALLSLGIAYYVSGVLPFSASQLELVH.

ANK repeat units lie at residues 11–40 (QTSV…DPNI), 44–73 (RGRT…DLLA), 77–103 (QGNT…KIDI), and 107–138 (NGST…EVKG). The chain crosses the membrane as a helical span at residues 195-215 (VLLLLVVIALLSLGIAYYVSG).

It is found in the membrane. The polypeptide is Ankyrin repeat domain-containing protein 46 (ankrd46) (Danio rerio (Zebrafish)).